Consider the following 463-residue polypeptide: Formate-nitrite transporter 2 (463 aa).

Over 1 to 100 (MCSIPPLRLL…VKKTQLRIDR (100 aa)) the chain is Cytoplasmic. Residues 101–121 (LLLQAFMAGIFVAMAGHCCTV) form a helical membrane-spanning segment. Topologically, residues 122–142 (LAGSYPTDPGDPLAVAKPTQK) are extracellular. The chain crosses the membrane as a helical span at residues 143-163 (FIYGALFPVAFICIILTGAEL). Topologically, residues 164–189 (FTGNTMTMLICYFQKRVTMLQLGVNW) are cytoplasmic. The chain crosses the membrane as a helical span at residues 190-210 (LGSLAGNWLGALFGAYFLSYL). Residues 211-237 (TGALGDEHVRQFLFRTCVNKISYGWGE) lie on the Extracellular side of the membrane. The chain crosses the membrane as a helical span at residues 238 to 258 (CFLRGVGCNTFVCLAVWAVIA). Residues 259–265 (SENVAGK) are Cytoplasmic-facing. The helical transmembrane segment at 266 to 286 (VLVMWFPIVAFCVGGYEHIIA) threads the bilayer. At 287-305 (NMYTLQAGLMAGAPVAILD) the chain is on the extracellular side. Residues 306–326 (VIAFNFLPTLLGNIVGGCLLV) traverse the membrane as a helical segment. Over 327-463 (GAVYAYNFYP…QTAESVAQQV (137 aa)) the chain is Cytoplasmic. The tract at residues 424–463 (SGNLSTHARLDLPNRPVEPPSDGLEVTPQSQTAESVAQQV) is disordered. Over residues 450 to 463 (TPQSQTAESVAQQV) the composition is skewed to polar residues.

It belongs to the FNT transporter (TC 1.A.16) family. As to quaternary structure, homopentamer.

The protein resides in the cell membrane. It carries out the reaction (S)-lactate(in) + H(+)(in) = (S)-lactate(out) + H(+)(out). The enzyme catalyses formate(in) + H(+)(in) = formate(out) + H(+)(out). The catalysed reaction is pyruvate(out) + H(+)(out) = pyruvate(in) + H(+)(in). It catalyses the reaction acetate(out) + H(+)(out) = acetate(in) + H(+)(in). Its activity is regulated as follows. Inhibited by p-chloromercuribenzene sulfonate (pCMBS). Methyl methanethiosulfonate (MMTS) inhibits L-lactate but not formate transport. Inhibited by the Malaria Box compound MMV007839. Inhibited by BH-296, BH-317, BH-326 and BH-388 compounds. Monocarboxylate-proton symporter; active in acidic-to-neutral pH range. Transports L-lactate and formate. In Toxoplasma gondii (strain ATCC 50611 / Me49), this protein is Formate-nitrite transporter 2.